The following is a 106-amino-acid chain: MGNLFYFILAAFCEISGCYLFWLHFRSDKPALLLLPAAACLLVFAYLLTKIDTATAGRAYAVYGGIYIVCSLAWMYGIEKFSPDIWDYIGVGICLIGASVILFAPR.

A run of 4 helical transmembrane segments spans residues 5-25, 31-51, 59-79, and 85-105; these read FYFI…WLHF, ALLL…LTKI, AYAV…YGIE, and IWDY…LFAP.

The protein belongs to the UPF0060 family.

It localises to the cell inner membrane. This chain is UPF0060 membrane protein CHU_3331, found in Cytophaga hutchinsonii (strain ATCC 33406 / DSM 1761 / CIP 103989 / NBRC 15051 / NCIMB 9469 / D465).